The chain runs to 280 residues: NAD(P)H-quinone oxidoreductase subunit K, chloroplastic (280 aa).

4 residues coordinate [4Fe-4S] cluster: Cys-65, Cys-66, Cys-130, and Cys-161. The interval 257 to 280 (LLKDWKQSNQKQEQNVKMMKEEEA) is disordered.

Belongs to the complex I 20 kDa subunit family. As to quaternary structure, NDH is composed of at least 16 different subunits, 5 of which are encoded in the nucleus. [4Fe-4S] cluster is required as a cofactor.

The protein resides in the plastid. It localises to the chloroplast thylakoid membrane. The enzyme catalyses a plastoquinone + NADH + (n+1) H(+)(in) = a plastoquinol + NAD(+) + n H(+)(out). It carries out the reaction a plastoquinone + NADPH + (n+1) H(+)(in) = a plastoquinol + NADP(+) + n H(+)(out). Functionally, NDH shuttles electrons from NAD(P)H:plastoquinone, via FMN and iron-sulfur (Fe-S) centers, to quinones in the photosynthetic chain and possibly in a chloroplast respiratory chain. The immediate electron acceptor for the enzyme in this species is believed to be plastoquinone. Couples the redox reaction to proton translocation, and thus conserves the redox energy in a proton gradient. The sequence is that of NAD(P)H-quinone oxidoreductase subunit K, chloroplastic from Staurastrum punctulatum (Green alga).